The sequence spans 322 residues: Polyisoprenyl-teichoic acid--peptidoglycan teichoic acid transferase TagT (322 aa).

The Cytoplasmic segment spans residues 1–19 (MEERSQRRKKKRKLKKWVK). A helical; Signal-anchor for type II membrane protein transmembrane segment spans residues 20 to 40 (VVAGLMAFLVIAAGSVGAYAF). Residues 41–322 (VKLNNASKEA…KKELQNDLGV (282 aa)) are Extracellular-facing.

The protein belongs to the LytR/CpsA/Psr (LCP) family. In terms of assembly, interacts with MreB.

Its subcellular location is the cell membrane. Its pathway is cell wall biogenesis. May catalyze the final step in cell wall teichoic acid biosynthesis, the transfer of the anionic cell wall polymers (APs) from their lipid-linked precursor to the cell wall peptidoglycan (PG). This Bacillus subtilis (strain 168) protein is Polyisoprenyl-teichoic acid--peptidoglycan teichoic acid transferase TagT.